The sequence spans 424 residues: Homeobox even-skipped homolog protein 2 (424 aa).

Disordered stretches follow at residues 18–65 (PAGK…DTPT) and 132–178 (TTQL…GPDQ). Composition is skewed to polar residues over residues 50–65 (RPTS…DTPT) and 132–145 (TTQL…VYSD). Low complexity predominate over residues 146–175 (NGSSTNTSSNGSNITNLNGNSSSIGNSGSG). The homeobox DNA-binding region spans 179-238 (VRRYRTAFTREQIGRLEKEFYRENYVSRPRRCELAAALNLPETTIKVWFQNRRMKDKRQR).

It belongs to the even-skipped homeobox family.

The protein resides in the nucleus. This chain is Homeobox even-skipped homolog protein 2 (EVX2), found in Heterodontus francisci (Horn shark).